The sequence spans 515 residues: Bifunctional purine biosynthesis protein PurH (515 aa).

The region spanning 1-145 (MTKRALISVS…KNHASVTVVV (145 aa)) is the MGS-like domain.

This sequence belongs to the PurH family.

It catalyses the reaction (6R)-10-formyltetrahydrofolate + 5-amino-1-(5-phospho-beta-D-ribosyl)imidazole-4-carboxamide = 5-formamido-1-(5-phospho-D-ribosyl)imidazole-4-carboxamide + (6S)-5,6,7,8-tetrahydrofolate. The catalysed reaction is IMP + H2O = 5-formamido-1-(5-phospho-D-ribosyl)imidazole-4-carboxamide. It participates in purine metabolism; IMP biosynthesis via de novo pathway; 5-formamido-1-(5-phospho-D-ribosyl)imidazole-4-carboxamide from 5-amino-1-(5-phospho-D-ribosyl)imidazole-4-carboxamide (10-formyl THF route): step 1/1. It functions in the pathway purine metabolism; IMP biosynthesis via de novo pathway; IMP from 5-formamido-1-(5-phospho-D-ribosyl)imidazole-4-carboxamide: step 1/1. The protein is Bifunctional purine biosynthesis protein PurH of Streptococcus suis (strain 98HAH33).